The chain runs to 273 residues: MNNRVHQGHLARKRFGQNFLNDQFVIDSIVSAINPQKGQAMVEIGPGLAALTEPVGERLDQLTVIELDRDLAARLQTHPFLGPKLTIYQQDAMTMNFGELSEKIGQPLRVFGNLPYNISTPLMFHLFSYTDAIADMHFMLQKEVVNRLVAGPNSKAYGRLSVMAQYYCQVIPVLEVPPSAFTPPPKVDSAVVRLVPHTTMPYPVKDIRVLSRITTEAFNQRRKTIRNSLGNLFSVEVLTELGIDPALRAENISVAQYCQMANYLSENAPSKES.

S-adenosyl-L-methionine-binding residues include N18, L20, G45, E66, D91, and N113.

Belongs to the class I-like SAM-binding methyltransferase superfamily. rRNA adenine N(6)-methyltransferase family. RsmA subfamily.

Its subcellular location is the cytoplasm. The catalysed reaction is adenosine(1518)/adenosine(1519) in 16S rRNA + 4 S-adenosyl-L-methionine = N(6)-dimethyladenosine(1518)/N(6)-dimethyladenosine(1519) in 16S rRNA + 4 S-adenosyl-L-homocysteine + 4 H(+). Specifically dimethylates two adjacent adenosines (A1518 and A1519) in the loop of a conserved hairpin near the 3'-end of 16S rRNA in the 30S particle. May play a critical role in biogenesis of 30S subunits. The sequence is that of Ribosomal RNA small subunit methyltransferase A from Citrobacter koseri (strain ATCC BAA-895 / CDC 4225-83 / SGSC4696).